The chain runs to 170 residues: Small ribosomal subunit protein bS18c (170 aa).

The segment at 1–61 (MYTSKQPFLK…RRPRIGPGDR (61 aa)) is disordered. Residues 13–26 (QPFSKSKQTFNKSK) show a composition bias toward polar residues. Basic residues predominate over residues 27-55 (QPFRKSKQTFRKFKQPFRKSKQPFRRRPR).

The protein belongs to the bacterial ribosomal protein bS18 family. In terms of assembly, part of the 30S ribosomal subunit.

It is found in the plastid. The protein localises to the chloroplast. This is Small ribosomal subunit protein bS18c from Hordeum vulgare (Barley).